We begin with the raw amino-acid sequence, 386 residues long: Acetylornithine aminotransferase (386 aa).

Pyridoxal 5'-phosphate-binding positions include 94-95 (GT) and phenylalanine 121. Arginine 124 contacts N(2)-acetyl-L-ornithine. 206-209 (DEVQ) serves as a coordination point for pyridoxal 5'-phosphate. Residue lysine 235 is modified to N6-(pyridoxal phosphate)lysine. Serine 263 contributes to the N(2)-acetyl-L-ornithine binding site. Residue threonine 264 coordinates pyridoxal 5'-phosphate.

The protein belongs to the class-III pyridoxal-phosphate-dependent aminotransferase family. ArgD subfamily. Homodimer. Requires pyridoxal 5'-phosphate as cofactor.

It localises to the cytoplasm. It catalyses the reaction N(2)-acetyl-L-ornithine + 2-oxoglutarate = N-acetyl-L-glutamate 5-semialdehyde + L-glutamate. Its pathway is amino-acid biosynthesis; L-arginine biosynthesis; N(2)-acetyl-L-ornithine from L-glutamate: step 4/4. This chain is Acetylornithine aminotransferase, found in Listeria monocytogenes serovar 1/2a (strain ATCC BAA-679 / EGD-e).